A 119-amino-acid polypeptide reads, in one-letter code: Protein MRP-126 (119 aa).

2 consecutive EF-hand domains span residues 23–58 and 59–94; these read DVFH…LKHV and KNQV…VTVA. Ca(2+)-binding residues include Thr37, Glu42, Asp72, Asn74, Asp76, Gln78, and Glu83.

It belongs to the S-100 family. Expressed in v-myb-transformed myelomonocytic cells.

The chain is Protein MRP-126 from Gallus gallus (Chicken).